A 134-amino-acid polypeptide reads, in one-letter code: Small ribosomal subunit protein uS8 (134 aa).

This sequence belongs to the universal ribosomal protein uS8 family. As to quaternary structure, part of the 30S ribosomal subunit. Contacts proteins S5 and S12.

Its function is as follows. One of the primary rRNA binding proteins, it binds directly to 16S rRNA central domain where it helps coordinate assembly of the platform of the 30S subunit. The polypeptide is Small ribosomal subunit protein uS8 (Thermosipho melanesiensis (strain DSM 12029 / CIP 104789 / BI429)).